Reading from the N-terminus, the 196-residue chain is Mpv17-like protein (196 aa).

Residues 1-16 (MVSWWQALTRAAGRYP) are Cytoplasmic-facing. Positions 16-55 (PWPANVLLYAGFFSGGDALQQVLRGGPADWQHTRHVATVA) are targeting to peroxisomes. Residues 17 to 34 (WPANVLLYAGFFSGGDAL) traverse the membrane as a helical segment. Topologically, residues 35–50 (QQVLRGGPADWQHTRH) are lumenal. Residues 51-67 (VATVAVAFHANLNYVWL) form a helical membrane-spanning segment. Over 68-90 (NLLERALPGRAPRTILAKVLCDQ) the chain is Cytoplasmic. A helical membrane pass occupies residues 91-108 (ALGGPVYVSTFYAGMSIL). The Lumenal segment spans residues 109–150 (QGKDDIFLDMRQKFWNTYKSGLMYWPFVQLINFSLIPIRWRT). A helical transmembrane segment spans residues 151–167 (AYTGLCGFLWATFLCFS). Residues 168–196 (QQEGDGTFKSAFTFRRIKVTNEVEKPSEK) lie on the Cytoplasmic side of the membrane.

The protein belongs to the peroxisomal membrane protein PXMP2/4 family.

Its subcellular location is the peroxisome membrane. Its function is as follows. Participates in reactive oxygen species metabolism by up- or down-regulation of the genes of antioxidant enzymes. Protective against the mitochondrial apoptotic cascade. The polypeptide is Mpv17-like protein (MPV17L) (Bos taurus (Bovine)).